The sequence spans 344 residues: Outer membrane protein B (344 aa).

A signal peptide spans 1 to 30; that stretch reads MNSKMLKHLRLATLSFSMFFGIVSSPAVYA.

Belongs to the chlamydial OMP family.

The protein resides in the cell outer membrane. The protein is Outer membrane protein B (ompB) of Chlamydia pneumoniae (Chlamydophila pneumoniae).